The primary structure comprises 480 residues: MAAVEAETGLLTLESLPTDPLLLILSFVDYRDLINCCYVSRRLSQLSTHDPLWRRHCKKYWLISEEEKAGKSQCWRSLFIETYSDVGRYIDHYAAIKKAWRDLKKYLEPRCPRMVLSLKEGAREEDLDAVEAQIGCKLPDDYRCSYRIHNGQKLVVPGLLGSMALSNHYRSEDLLDVDTAAGGFQQRQGLKYCLPLTFCIHTGLSQYIAVEAAEGRNKNEVFYQCPDQMARNPAAIDMFIIGATFTDWFTSYVNNVVSGGFPIIRDQIFRYIHDPECVATTGDITVSVSTSFLPELSSVHPPHYFFTYRIRIEMSRDALPEKACQLDSRYWRITNAKGDVEEVQGPGVVGEFPIISPGRIYEYTSCTTFSTTSGYMEGYYTFHFLYFKDKVFNVAIPRFHMACPTFRVSIARLEMGPDEYEEMEEEAEEEEEEENDDSADMDESDESDADENESDEGEGEARRRRVFDVPIRRRRCSRLF.

One can recognise an F-box domain in the interval 10-56; sequence LLTLESLPTDPLLLILSFVDYRDLINCCYVSRRLSQLSTHDPLWRRH. One can recognise an ApaG domain in the interval 278–408; the sequence is VATTGDITVS…FHMACPTFRV (131 aa). Acidic residues predominate over residues 419-458; that stretch reads EYEEMEEEAEEEEEEENDDSADMDESDESDADENESDEGE. Positions 419-463 are disordered; sequence EYEEMEEEAEEEEEEENDDSADMDESDESDADENESDEGEGEARR.

As to quaternary structure, part of a SCF (SKP1-cullin-F-box) protein ligase complex SCF(FBXO3) consisting of FBXO3, SKP1, CUL1 and RBX1. Interacts with PML, interaction is direct and takes place either alone or within the SCF complex.

It is found in the nucleus. The protein operates within protein modification; protein ubiquitination. In terms of biological role, substrate recognition component of the SCF (SKP1-CUL1-F-box protein)-type E3 ubiquitin ligase complex, SCF(FBXO3), which mediates the ubiquitination and subsequent proteasomal degradation of target proteins. Mediates the ubiquitination of HIPK2 and probably that of EP300, leading to rapid degradation by the proteasome. In the presence of PML, HIPK2 ubiquitination still occurs, but degradation is prevented. PML, HIPK2 and FBXO3 may act synergically to activate p53/TP53-dependent transactivation. The SCF(FBXO3) also acts as a regulator of inflammation by mediating ubiquitination and degradation of FBXL2: specifically recognizes FBXL2 phosphorylated at 'Thr-404' and promotes its ubiquitination. The polypeptide is F-box only protein 3 (Fbxo3) (Mus musculus (Mouse)).